The following is a 589-amino-acid chain: Lipoprotein LpqB (589 aa).

A signal peptide spans 1–20; that stretch reads MMRGVLVIMRLLCLGMLFTG. C21 is lipidated: N-palmitoyl cysteine. C21 carries S-diacylglycerol cysteine lipidation.

This sequence belongs to the LpqB lipoprotein family.

It localises to the cell membrane. In Mycobacterium leprae (strain TN), this protein is Lipoprotein LpqB.